The primary structure comprises 1286 residues: Galactose/N-acetyl-D-galactosamine lectin heavy subunit 2 (1286 aa).

The N-terminal stretch at 1–15 (MKLLLLNILLLCCLA) is a signal peptide. Over 16 to 1227 (DKLNEFSADI…NNVGAIAAAT (1212 aa)) the chain is Extracellular. N-linked (GlcNAc...) asparagine glycosylation is found at Asn200, Asn331, Asn384, Asn462, Asn652, Asn883, Asn1197, and Asn1207. A helical membrane pass occupies residues 1228-1248 (TVAVVVVAVVVALIVVSIGLF). Topologically, residues 1249–1286 (KTYQLVSSAMKNAITTTNENAEYVGADNEATNAATYNG) are cytoplasmic.

In terms of assembly, heterodimer composed of a 170 kDa heavy subunit (hgl) and a 31/35 kDa light subunit (lgl); disulfide-linked. Post-translationally, N-glycosylated.

Its subcellular location is the cell membrane. In terms of biological role, lectin which binds galactose and N-acetyl-D-galactosamine of host glycoproteins and thus mediates adhesion to host cells. Mediates adherence to host colonic mucins, an essential step for pathogenic tissue invasion. In Entamoeba histolytica (strain ATCC 30459 / HM-1:IMSS / ABRM), this protein is Galactose/N-acetyl-D-galactosamine lectin heavy subunit 2.